A 920-amino-acid polypeptide reads, in one-letter code: 2-oxoadipate dehydrogenase complex component E1 (920 aa).

The interval 299 to 322 is disordered; it reads QGKTRGRQQVKQDGDYSTDPHSRP. The span at 308 to 322 shows a compositional bias: basic and acidic residues; it reads VKQDGDYSTDPHSRP.

This sequence belongs to the alpha-ketoglutarate dehydrogenase family. As to quaternary structure, the 2-oxoadipate dehydrogenase complex is composed of OADH (2-oxoadipate dehydrogenase; E1a), DLST (dihydrolipoamide succinyltransferase; E2) and DLD (dihydrolipoamide dehydrogenase; E3). E1a functional unit is a dimer. Thiamine diphosphate serves as cofactor.

The protein localises to the mitochondrion. It catalyses the reaction N(6)-[(R)-lipoyl]-L-lysyl-[protein] + 2-oxoadipate + H(+) = N(6)-[(R)-S(8)-glutaryldihydrolipoyl]-L-lysyl-[protein] + CO2. It functions in the pathway amino-acid degradation. In terms of biological role, 2-oxoadipate dehydrogenase (E1a) component of the 2-oxoadipate dehydrogenase complex (OADHC). Participates in the first step, rate limiting for the overall conversion of 2-oxoadipate (alpha-ketoadipate) to glutaryl-CoA and CO(2) catalyzed by the whole OADHC. Catalyzes the irreversible decarboxylation of 2-oxoadipate via the thiamine diphosphate (ThDP) cofactor and subsequent transfer of the decarboxylated acyl intermediate on an oxidized dihydrolipoyl group that is covalently amidated to the E2 enzyme (dihydrolipoyllysine-residue succinyltransferase or DLST). Can catalyze the decarboxylation of 2-oxoglutarate in vitro, but at a much lower rate than 2-oxoadipate. Responsible for the last step of L-lysine, L-hydroxylysine and L-tryptophan catabolism with the common product being 2-oxoadipate. This Danio rerio (Zebrafish) protein is 2-oxoadipate dehydrogenase complex component E1 (dhtkd1).